The primary structure comprises 247 residues: Protein McbF (247 aa).

Positions 6–234 constitute an ABC transporter domain; it reads LEINSLSFSY…NNETTQKRHL (229 aa). 40-47 contributes to the ATP binding site; that stretch reads GENPAGKT.

It belongs to the ABC transporter superfamily.

In terms of biological role, together with two further proteins McbE and McbG this protein causes immunity to the peptide antibiotic microcin B17, which inhibits DNA replication in enterobacteriaceae. Immunity is determined by two different mechanisms. McbE is involved in the production of extracellular MccB17 and, in a complex with mcbf it also serves as 'pump' for the export of active MccB17 from the cytoplasm to the periplasmic space. This is Protein McbF (mcbF) from Escherichia coli.